Consider the following 61-residue polypeptide: Metallothionein-1A (61 aa).

Residue M1 is modified to N-acetylmethionine. Positions 1-29 are beta; the sequence is MDPNCSCPTGGSCSCAGSCTCKACRCTSC. C5, C7, C13, C15, C19, C21, C24, C26, C29, C33, C34, C36, C37, C41, C44, C48, C50, and C57 together coordinate a divalent metal cation. Positions 30-61 are alpha; it reads KKSCCSCCPAGCARCAQGCICKGASDKCSCCA. S58 is modified (phosphoserine). Positions 59 and 60 each coordinate a divalent metal cation.

This sequence belongs to the metallothionein superfamily. Type 1 family. Monomer.

Functionally, metallothioneins have a high content of cysteine residues that bind various heavy metals; these proteins are transcriptionally regulated by both heavy metals and glucocorticoids. This Sus scrofa (Pig) protein is Metallothionein-1A (MT1A).